A 252-amino-acid chain; its full sequence is 3-dehydroquinate dehydratase (252 aa).

3-dehydroquinate is bound by residues Ser21, Glu46–Arg48, and Arg82. The Proton donor/acceptor role is filled by His143. The active-site Schiff-base intermediate with substrate is the Lys170. Residues Arg213, Ser232, and Gln236 each coordinate 3-dehydroquinate.

It belongs to the type-I 3-dehydroquinase family. As to quaternary structure, homodimer.

The enzyme catalyses 3-dehydroquinate = 3-dehydroshikimate + H2O. It participates in metabolic intermediate biosynthesis; chorismate biosynthesis; chorismate from D-erythrose 4-phosphate and phosphoenolpyruvate: step 3/7. In terms of biological role, involved in the third step of the chorismate pathway, which leads to the biosynthesis of aromatic amino acids. Catalyzes the cis-dehydration of 3-dehydroquinate (DHQ) and introduces the first double bond of the aromatic ring to yield 3-dehydroshikimate. The protein is 3-dehydroquinate dehydratase of Escherichia coli O127:H6 (strain E2348/69 / EPEC).